Here is a 604-residue protein sequence, read N- to C-terminus: Sulfite reductase [NADPH] flavoprotein alpha-component (604 aa).

Residues 66–204 (VTVLSASQTG…AADGWTDNIA (139 aa)) enclose the Flavodoxin-like domain. FMN is bound by residues 72 to 77 (SQTGNA), 119 to 122 (STQG), and 155 to 164 (LGDSSYPNFC). The FAD-binding FR-type domain maps to 239 to 453 (ADPFPAALLA…VERNDGFRLP (215 aa)). Residues Thr327, Gln361, 391 to 394 (RLYS), 409 to 411 (TVG), and 424 to 427 (GGAS) contribute to the FAD site. Residues 524–525 (SR), 530–534 (KIYVQ), and Asp566 contribute to the NADP(+) site. Residue Tyr604 coordinates FAD.

It belongs to the NADPH-dependent sulphite reductase flavoprotein subunit CysJ family. In the N-terminal section; belongs to the flavodoxin family. The protein in the C-terminal section; belongs to the flavoprotein pyridine nucleotide cytochrome reductase family. In terms of assembly, alpha(8)-beta(8). The alpha component is a flavoprotein, the beta component is a hemoprotein. It depends on FAD as a cofactor. FMN serves as cofactor.

It carries out the reaction hydrogen sulfide + 3 NADP(+) + 3 H2O = sulfite + 3 NADPH + 4 H(+). It participates in sulfur metabolism; hydrogen sulfide biosynthesis; hydrogen sulfide from sulfite (NADPH route): step 1/1. Component of the sulfite reductase complex that catalyzes the 6-electron reduction of sulfite to sulfide. This is one of several activities required for the biosynthesis of L-cysteine from sulfate. The flavoprotein component catalyzes the electron flow from NADPH -&gt; FAD -&gt; FMN to the hemoprotein component. This Neisseria meningitidis serogroup A / serotype 4A (strain DSM 15465 / Z2491) protein is Sulfite reductase [NADPH] flavoprotein alpha-component.